The following is a 525-amino-acid chain: GMP synthase [glutamine-hydrolyzing] (525 aa).

One can recognise a Glutamine amidotransferase type-1 domain in the interval 9-207 (RILILDFGSQ…VLQICQCEPL (199 aa)). Cysteine 86 acts as the Nucleophile in catalysis. Residues histidine 181 and glutamate 183 contribute to the active site. Positions 208–400 (WTPRNIIDQT…LGLPNAMLHR (193 aa)) constitute a GMPS ATP-PPase domain. 235–241 (SGGVDSA) is an ATP binding site.

As to quaternary structure, homodimer.

The enzyme catalyses XMP + L-glutamine + ATP + H2O = GMP + L-glutamate + AMP + diphosphate + 2 H(+). Its pathway is purine metabolism; GMP biosynthesis; GMP from XMP (L-Gln route): step 1/1. In terms of biological role, catalyzes the synthesis of GMP from XMP. The chain is GMP synthase [glutamine-hydrolyzing] from Hamiltonella defensa subsp. Acyrthosiphon pisum (strain 5AT).